A 286-amino-acid polypeptide reads, in one-letter code: DegV domain-containing protein M6_Spy1658 (286 aa).

The DegV domain occupies 3–282; it reads FTIMTDSTAD…PNTLAVFVIG (280 aa). 2 residues coordinate hexadecanoate: T62 and S94.

In terms of biological role, may bind long-chain fatty acids, such as palmitate, and may play a role in lipid transport or fatty acid metabolism. The chain is DegV domain-containing protein M6_Spy1658 from Streptococcus pyogenes serotype M6 (strain ATCC BAA-946 / MGAS10394).